We begin with the raw amino-acid sequence, 755 residues long: SWI/SNF-related matrix-associated actin-dependent regulator of chromatin subfamily A-like protein 1 (755 aa).

Residues 7-27 adopt a coiled-coil conformation; sequence SEIAEKKRIALAKLQAKKSQL. 2 disordered regions span residues 26-91 and 104-134; these read QLLA…NKSS and SNRE…SLSS. Polar residues predominate over residues 32–63; the sequence is PATNGKSTTSATGATQHANNGKSNPNQPQAKS. Residue Ser-63 is modified to Phosphoserine. The HARP domain maps to 139–217; that stretch reads PVAVLLGNSI…KPYVHMNGIP (79 aa). The 157-residue stretch at 256 to 412 folds into the Helicase ATP-binding domain; sequence CFAIAQKGRI…FTQLQMIDGK (157 aa). Residue 269-276 participates in ATP binding; it reads DEMGLGKT. Residues 361–364 carry the DESH box motif; the sequence is DESH. Positions 527–681 constitute a Helicase C-terminal domain; it reads YLKTLVKEQK…NLQKATHTAA (155 aa).

The protein belongs to the SNF2/RAD54 helicase family. SMARCAL1 subfamily.

The protein localises to the nucleus. ATP-dependent annealing helicase that catalyzes the rewinding of the stably unwound DNA. This Drosophila melanogaster (Fruit fly) protein is SWI/SNF-related matrix-associated actin-dependent regulator of chromatin subfamily A-like protein 1 (Marcal1).